A 200-amino-acid polypeptide reads, in one-letter code: Recombination protein RecR (200 aa).

The segment at 59-74 adopts a C4-type zinc-finger fold; that stretch reads CDICGNVCESSPCPVC. The 96-residue stretch at 82-177 folds into the Toprim domain; the sequence is SVICVVEEPK…KVTRLASGLP (96 aa).

Belongs to the RecR family.

In terms of biological role, may play a role in DNA repair. It seems to be involved in an RecBC-independent recombinational process of DNA repair. It may act with RecF and RecO. This Bifidobacterium longum subsp. infantis (strain ATCC 15697 / DSM 20088 / JCM 1222 / NCTC 11817 / S12) protein is Recombination protein RecR.